The chain runs to 94 residues: MQFLFNIQLFAHKKGQGSVKNGRDSNPKYLGVKKYDGEVVKAGNIIVRQRGTKYHAGNNMGIGKDHTLFALIDGYVKFERLGKNKKQISIYSEK.

The propeptide occupies 1–10 (MQFLFNIQLF).

This sequence belongs to the bacterial ribosomal protein bL27 family. Post-translationally, the N-terminus is cleaved by ribosomal processing cysteine protease Prp.

The chain is Large ribosomal subunit protein bL27 from Fusobacterium nucleatum subsp. nucleatum (strain ATCC 25586 / DSM 15643 / BCRC 10681 / CIP 101130 / JCM 8532 / KCTC 2640 / LMG 13131 / VPI 4355).